Reading from the N-terminus, the 358-residue chain is Photosystem II protein D1 3 (358 aa).

3 consecutive transmembrane segments (helical) span residues 28-45, 117-132, and 141-155; these read YIGW…AATT, HFLI…QWEL, and WICV…AAMA. His-117 is a binding site for chlorophyll a. A pheophytin a-binding site is contributed by Tyr-125. [CaMn4O5] cluster-binding residues include Asp-169 and Glu-188. A helical membrane pass occupies residues 196–217; the sequence is FHMLGVAGVFGGSLFSAMHGSL. Residue His-197 participates in chlorophyll a binding. Residues His-214 and 263–264 each bind a quinone; that span reads SF. Position 214 (His-214) interacts with Fe cation. His-271 is a Fe cation binding site. Residues 273-287 form a helical membrane-spanning segment; that stretch reads LLGAWPVVGIWFTSM. Residues His-331, Glu-332, Asp-341, and Ala-343 each coordinate [CaMn4O5] cluster. Positions 344–358 are excised as a propeptide; the sequence is TVESTPVALQAPAIG.

This sequence belongs to the reaction center PufL/M/PsbA/D family. In terms of assembly, PSII is composed of 1 copy each of membrane proteins PsbA, PsbB, PsbC, PsbD, PsbE, PsbF, PsbH, PsbI, PsbJ, PsbK, PsbL, PsbM, PsbT, PsbX, PsbY, PsbZ, Psb30/Ycf12, peripheral proteins PsbO, CyanoQ (PsbQ), PsbU, PsbV and a large number of cofactors. It forms dimeric complexes. The D1/D2 heterodimer binds P680, chlorophylls that are the primary electron donor of PSII, and subsequent electron acceptors. It shares a non-heme iron and each subunit binds pheophytin, quinone, additional chlorophylls, carotenoids and lipids. D1 provides most of the ligands for the Mn4-Ca-O5 cluster of the oxygen-evolving complex (OEC). There is also a Cl(-1) ion associated with D1 and D2, which is required for oxygen evolution. The PSII complex binds additional chlorophylls, carotenoids and specific lipids. serves as cofactor. Post-translationally, tyr-160 forms a radical intermediate that is referred to as redox-active TyrZ, YZ or Y-Z. In terms of processing, C-terminally processed by CtpA; processing is essential to allow assembly of the oxygen-evolving complex and thus photosynthetic growth.

The protein resides in the cellular thylakoid membrane. The enzyme catalyses 2 a plastoquinone + 4 hnu + 2 H2O = 2 a plastoquinol + O2. Its function is as follows. Photosystem II (PSII) is a light-driven water:plastoquinone oxidoreductase that uses light energy to abstract electrons from H(2)O, generating O(2) and a proton gradient subsequently used for ATP formation. It consists of a core antenna complex that captures photons, and an electron transfer chain that converts photonic excitation into a charge separation. The D1/D2 (PsbA/PsbD) reaction center heterodimer binds P680, the primary electron donor of PSII as well as several subsequent electron acceptors. The protein is Photosystem II protein D1 3 of Synechococcus sp. (strain CC9311).